A 319-amino-acid chain; its full sequence is tRNA uridine(34) hydroxylase (319 aa).

The Rhodanese domain occupies 127–221; sequence KQEDTVIIDA…YGKDPEVQGE (95 aa). Catalysis depends on Cys-181, which acts as the Cysteine persulfide intermediate.

Belongs to the TrhO family.

The catalysed reaction is uridine(34) in tRNA + AH2 + O2 = 5-hydroxyuridine(34) in tRNA + A + H2O. Its function is as follows. Catalyzes oxygen-dependent 5-hydroxyuridine (ho5U) modification at position 34 in tRNAs. This chain is tRNA uridine(34) hydroxylase, found in Bacillus thuringiensis (strain Al Hakam).